A 391-amino-acid chain; its full sequence is Putative 12-oxophytodienoate reductase 6 (391 aa).

FMN-binding positions include 42–44, Ala-75, and Gln-117; that span reads PMT. 189–192 contacts substrate; it reads HGAN. The Proton donor role is filled by Tyr-194. Arg-241 lines the FMN pocket. Residue Arg-282 coordinates substrate. FMN contacts are provided by residues Gly-312 and 333–334; that span reads GR. Residues 372-391 form a disordered region; it reads YPFLDEHHHDDDDDSNAPSA. A compositionally biased stretch (acidic residues) spans 382–391; it reads DDDDSNAPSA.

The protein belongs to the NADH:flavin oxidoreductase/NADH oxidase family. It depends on FMN as a cofactor.

In terms of biological role, putative oxophytodienoate reductase that may be involved in the biosynthesis or metabolism of oxylipin signaling molecules. This Oryza sativa subsp. japonica (Rice) protein is Putative 12-oxophytodienoate reductase 6 (OPR6).